A 765-amino-acid polypeptide reads, in one-letter code: Probable beta-glucosidase M (765 aa).

Residues 1-19 (MHSISALLSLLGGLALSSA) form the signal peptide. Residues Asn-24, Asn-71, Asn-93, Asn-126, and Asn-258 are each glycosylated (N-linked (GlcNAc...) asparagine). Asp-286 is an active-site residue. Asn-314, Asn-321, Asn-432, Asn-519, Asn-541, and Asn-647 each carry an N-linked (GlcNAc...) asparagine glycan.

It belongs to the glycosyl hydrolase 3 family.

The protein resides in the secreted. It catalyses the reaction Hydrolysis of terminal, non-reducing beta-D-glucosyl residues with release of beta-D-glucose.. It functions in the pathway glycan metabolism; cellulose degradation. Its function is as follows. Beta-glucosidases are one of a number of cellulolytic enzymes involved in the degradation of cellulosic biomass. Catalyzes the last step releasing glucose from the inhibitory cellobiose. This is Probable beta-glucosidase M (bglM) from Aspergillus niger (strain ATCC MYA-4892 / CBS 513.88 / FGSC A1513).